The sequence spans 926 residues: DNA mismatch repair protein MutS (926 aa).

A disordered region spans residues 1–67 (MAASPNPLQG…NPNQINDLDQ (67 aa)). 2 stretches are compositionally biased toward polar residues: residues 18 to 44 (QSTTNGGKETNNSIGSSENLSNQQLKS) and 57 to 67 (KNPNQINDLDQ). 726 to 733 (GPNASGKS) contributes to the ATP binding site.

Belongs to the DNA mismatch repair MutS family.

This protein is involved in the repair of mismatches in DNA. It is possible that it carries out the mismatch recognition step. This protein has a weak ATPase activity. The protein is DNA mismatch repair protein MutS of Prochlorococcus marinus (strain NATL1A).